Reading from the N-terminus, the 1562-residue chain is NAC-alpha domain-containing protein 1 (1562 aa).

The segment covering 1–13 (MPGEAARAELLLP) has biased composition (low complexity). Disordered regions lie at residues 1-24 (MPGEAARAELLLPEADRPGPRTDL), 56-110 (FLPS…TEAP), 131-226 (SPRA…ADGD), 249-288 (SGWGLSPQGSMVDERELHPAGTPEPPSSESSLSADSSSSW), 327-365 (TPLSPEEEEEEAVADPDPGGDLAGEGEEDSTSASFLQSL), 381-458 (RDDT…GAYL), 503-941 (TPQA…EPLA), and 953-1423 (GCAP…AMSK). Basic and acidic residues predominate over residues 195 to 208 (GDARDSEAELRDEL). Over residues 275 to 287 (SSESSLSADSSSS) the composition is skewed to low complexity. Positions 331 to 340 (PEEEEEEAVA) are enriched in acidic residues. Over residues 385-397 (SAASSDSDSASYA) the composition is skewed to low complexity. 2 stretches are compositionally biased toward polar residues: residues 449-458 (PQTSDRGAYL) and 550-564 (QEETSLTLCPDSPQN). Positions 992–1007 (PAALDQVQQDDPQPAA) are enriched in low complexity. Over residues 1048 to 1074 (PGREACLEARAHTGDGAKPDSPQKETL) the composition is skewed to basic and acidic residues. Ser-1068 carries the post-translational modification Phosphoserine. Low complexity-rich tracts occupy residues 1172–1182 (APTSAPTSQQP) and 1231–1241 (APGTLAGAALP). Positions 1254–1264 (PQEDSVEDEEP) are enriched in acidic residues. 3 stretches are compositionally biased toward low complexity: residues 1265–1284 (PGSLGLPPPQAGVQPAAAAV), 1298–1308 (SLSPHSPLLSP), and 1335–1344 (QSPAGPQGLS). Positions 1348-1357 (QQEDEDSLEE) are enriched in acidic residues. Ser-1354 carries the phosphoserine modification. An NAC-A/B domain is found at 1411-1476 (SRSEKKARKA…AKIEDLSQQV (66 aa)).

It belongs to the NAC-alpha family.

It localises to the cytoplasm. The protein localises to the nucleus. May prevent inappropriate targeting of non-secretory polypeptides to the endoplasmic reticulum (ER). May bind to nascent polypeptide chains as they emerge from the ribosome and block their interaction with the signal recognition particle (SRP), which normally targets nascent secretory peptides to the ER. May also reduce the inherent affinity of ribosomes for protein translocation sites in the ER membrane (M sites). This is NAC-alpha domain-containing protein 1 (NACAD) from Homo sapiens (Human).